Here is a 25-residue protein sequence, read N- to C-terminus: Gamma-conotoxin PiVIIA (25 aa).

Cystine bridges form between Cys-1–Cys-15, Cys-8–Cys-19, and Cys-14–Cys-24. The residue at position 4 (Pro-4) is a 4-hydroxyproline. 4-carboxyglutamate occurs at positions 13 and 20.

This sequence belongs to the conotoxin O2 superfamily. As to expression, expressed by the venom duct.

The protein resides in the secreted. Its function is as follows. Micromolar concentrations of PiVIIA increase the magnitude of the macroscopic calcium current in DRG neurons from rat. An increase, even modest of the calcium current, may have a significant impact in the excitability and electrical activity of neurons, and may set up PiVIIA as a member of the pharmacological family of the gamma-conotoxins. This chain is Gamma-conotoxin PiVIIA, found in Conus princeps (Prince cone).